A 251-amino-acid chain; its full sequence is Capsid protein (251 aa).

The disordered stretch occupies residues 1–27 (MPKRDLPWRSMPGTSKTSRNANYSPRA). Residues 3–20 (KRDLPWRSMPGTSKTSRN) carry the Bipartite nuclear localization signal motif. Residues 12 to 23 (PGTSKTSRNANY) are compositionally biased toward polar residues. A Nuclear localization signal motif is present at residues 35–49 (KASEWVHRPMYRKPR). A zinc finger spans residues 63 to 80 (CEGPCKVQSYEQRHDISH). Residues 96-117 (ITHRVGKRFCVKSVYILGKIWM) carry the Nuclear export signal motif. Positions 195–242 (KRFWKVNNHVVYNHQEAGKYENHTENALLLYMACTHASNPVYATLKIR) match the Bipartite nuclear localization signal motif.

Belongs to the geminiviridae capsid protein family. As to quaternary structure, homomultimer. Binds to single-stranded and double-stranded viral DNA. Interacts (via nuclear localization signals) with host importin alpha-1a.

The protein localises to the virion. It is found in the host nucleus. Encapsidates the viral DNA into characteristic twinned ('geminate') particles. Binds the genomic viral ssDNA and shuttles it into and out of the cell nucleus. The CP of bipartite geminiviruses is not required for cell-to-cell or systemic movement. The protein is Capsid protein of Abutilon (Upland cotton).